The chain runs to 140 residues: Ribosome maturation factor RimP (140 aa).

Belongs to the RimP family.

It localises to the cytoplasm. Required for maturation of 30S ribosomal subunits. The chain is Ribosome maturation factor RimP from Campylobacter jejuni subsp. jejuni serotype O:6 (strain 81116 / NCTC 11828).